The primary structure comprises 498 residues: ATP synthase subunit beta, chloroplastic (498 aa).

Residue 172–179 (GGAGVGKT) coordinates ATP.

It belongs to the ATPase alpha/beta chains family. As to quaternary structure, F-type ATPases have 2 components, CF(1) - the catalytic core - and CF(0) - the membrane proton channel. CF(1) has five subunits: alpha(3), beta(3), gamma(1), delta(1), epsilon(1). CF(0) has four main subunits: a(1), b(1), b'(1) and c(9-12).

The protein resides in the plastid. The protein localises to the chloroplast thylakoid membrane. It catalyses the reaction ATP + H2O + 4 H(+)(in) = ADP + phosphate + 5 H(+)(out). Its function is as follows. Produces ATP from ADP in the presence of a proton gradient across the membrane. The catalytic sites are hosted primarily by the beta subunits. The protein is ATP synthase subunit beta, chloroplastic of Sorghum bicolor (Sorghum).